A 332-amino-acid chain; its full sequence is CMRF35-like molecule 1 (332 aa).

Positions 1-18 (MHLSLLALFLFWISGCFT) are cleaved as a signal peptide. The Extracellular portion of the chain corresponds to 19-181 (AQDPVTGPEE…GDGNGFLDLS (163 aa)). One can recognise an Ig-like V-type domain in the interval 22–125 (PVTGPEEVSG…YDHMFKVHVS (104 aa)). Cystine bridges form between Cys-41-Cys-109 and Cys-55-Cys-63. Asn-89 carries an N-linked (GlcNAc...) asparagine glycan. Residues 182–202 (VLLPVISAALLLLLLVVSLIA) form a helical membrane-spanning segment. Residues 203-332 (WRMVRRQKKA…EYSSIRRPMP (130 aa)) are Cytoplasmic-facing. Disordered stretches follow at residues 251–270 (PRTS…KDHQ) and 313–332 (PRTN…RPMP).

The protein belongs to the CD300 family. Interacts with PTPN6/SHP-1 in a tyrosine phosphorylation dependent manner. Interacts with IL4R. In terms of processing, phosphorylated on tyrosine.

The protein resides in the cell membrane. Its function is as follows. Acts as an inhibitory receptor for myeloid cells and mast cells. Positively regulates the phagocytosis of apoptotic cells (efferocytosis) via phosphatidylserine (PS) recognition; recognizes and binds PS as a ligand which is expressed on the surface of apoptotic cells. Plays an important role in the maintenance of immune homeostasis, by promoting macrophage-mediated efferocytosis and by inhibiting dendritic cell-mediated efferocytosis. Negatively regulates Fc epsilon receptor-dependent mast cell activation and allergic responses via binding to ceramide and sphingomyelin which act as ligands. May act as a coreceptor for interleukin 4 (IL-4). Associates with and regulates IL-4 receptor alpha-mediated responses by augmenting IL-4- and IL-13-induced signaling. Negatively regulates the Toll-like receptor (TLR) signaling mediated by MYD88 and TRIF through activation of PTPN6/SHP-1 and PTPN11/SHP-2. Inhibits osteoclast formation. Induces macrophage cell death upon engagement. The chain is CMRF35-like molecule 1 (Cd300lf) from Rattus norvegicus (Rat).